Consider the following 252-residue polypeptide: Neurexophilin-3 (252 aa).

A signal peptide spans 1-22; sequence MQLTRCCFVFLVQGSLYLVICG. Positions 23 to 75 are II; sequence QDDGPPGSEDPEHDDHEGQPRPRVPRKRGHISPKSRPLANSTLLGLLAPPGEV. Residues 27–59 are disordered; it reads PPGSEDPEHDDHEGQPRPRVPRKRGHISPKSRP. Basic residues predominate over residues 45–55; the sequence is RVPRKRGHISP. 4 N-linked (GlcNAc...) asparagine glycosylation sites follow: Asn62, Asn127, Asn137, and Asn143. Positions 76–157 are III; the sequence is WGVLGQPPNR…LVPPSKAVEF (82 aa). Residues 158–166 are IV (linker domain); sequence HQEQQIFIE. The v (Cys-rich) stretch occupies residues 167-252; sequence AKASKIFNCR…HSDTPYYPSG (86 aa).

Belongs to the neurexophilin family. In terms of processing, may be proteolytically processed at the boundary between the N-terminal non-conserved and the central conserved domain in neuron-like cells. In terms of tissue distribution, highest level in brain, present also in lung, kidney and testis.

The protein resides in the secreted. In terms of biological role, may be signaling molecules that resemble neuropeptides. Ligand for alpha-neurexins. This Mus musculus (Mouse) protein is Neurexophilin-3 (Nxph3).